Consider the following 511-residue polypeptide: 2'-5'-oligoadenylate synthase-like protein 1 (511 aa).

Ubiquitin-like domains follow at residues 350 to 429 (IQVT…ISPE) and 430 to 506 (IQVF…EGAA).

It belongs to the 2-5A synthase family. In terms of assembly, specifically interacts with the ligand binding domain of the thyroid receptor (TR). TRIP14 does not require the presence of thyroid hormone for its interaction. Binds MBD1.

Its subcellular location is the nucleus. The protein localises to the nucleolus. It localises to the cytoplasm. In terms of biological role, does not have 2'-5'-OAS activity, but can bind double-stranded RNA. Displays antiviral activity via an alternative antiviral pathway independent of RNase L. This is 2'-5'-oligoadenylate synthase-like protein 1 (Oasl1) from Mus musculus (Mouse).